Here is an 819-residue protein sequence, read N- to C-terminus: Aminopeptidase O (819 aa).

Position 479 (histidine 479) interacts with Zn(2+). The Proton acceptor role is filled by glutamate 480. Zn(2+) contacts are provided by histidine 483 and glutamate 502. The Nucleolar localization signal signature appears at 689 to 699 (RRPRKRKRREK).

It belongs to the peptidase M1 family. It depends on Zn(2+) as a cofactor.

The protein localises to the nucleus. The protein resides in the nucleolus. It is found in the cytoplasm. Its function is as follows. Aminopeptidase which catalyzes the hydrolysis of amino acid residues from the N-terminus of peptide or protein substrates. This Homo sapiens (Human) protein is Aminopeptidase O.